A 145-amino-acid polypeptide reads, in one-letter code: MLSAEEKAAVTSLFAKVKVDEVGGEALGRLLVVYPWTQRFFESFGDLSSADAILGNPKVKAHGKKVLDSFCEGLKQLDDLKGAFASLSELHCDKLHVDPENFRLLGNVLVVVLARRFGSEFSPELQASFQKVVTGVANALAHRYH.

Residues 1–145 (MLSAEEKAAV…VANALAHRYH (145 aa)) form the Globin domain. His-62 and His-91 together coordinate heme b.

This sequence belongs to the globin family. As to quaternary structure, heterotetramer of two alpha chains and two beta chains. Red blood cells.

Involved in oxygen transport from the lung to the various peripheral tissues. The sequence is that of Hemoglobin fetal subunit beta from Bos taurus (Bovine).